We begin with the raw amino-acid sequence, 499 residues long: Cytochrome P450 81Q32 (499 aa).

The chain crosses the membrane as a helical span at residues 5-25; that stretch reads TLLYTFLAVVLLSISLKLFPV. N-linked (GlcNAc...) asparagine glycans are attached at residues Asn112, Asn183, and Asn266. A heme-binding site is contributed by Cys434.

The protein belongs to the cytochrome P450 family. Expressed in leaf epidermis and in the leaf internal phloem-associated parenchyma (IPAP) inside the mesophyll.

It is found in the membrane. This is Cytochrome P450 81Q32 from Catharanthus roseus (Madagascar periwinkle).